A 207-amino-acid chain; its full sequence is Large ribosomal subunit protein uL4 (207 aa).

Residues 45 to 78 (RQGTHAVKNRSARRGGGRKPWRQKGTGRARQGSI) form a disordered region. A compositionally biased stretch (basic residues) spans 51-71 (VKNRSARRGGGRKPWRQKGTG).

This sequence belongs to the universal ribosomal protein uL4 family. In terms of assembly, part of the 50S ribosomal subunit.

Its function is as follows. One of the primary rRNA binding proteins, this protein initially binds near the 5'-end of the 23S rRNA. It is important during the early stages of 50S assembly. It makes multiple contacts with different domains of the 23S rRNA in the assembled 50S subunit and ribosome. In terms of biological role, forms part of the polypeptide exit tunnel. This is Large ribosomal subunit protein uL4 from Lactiplantibacillus plantarum (strain ATCC BAA-793 / NCIMB 8826 / WCFS1) (Lactobacillus plantarum).